The following is a 342-amino-acid chain: S-adenosylmethionine:tRNA ribosyltransferase-isomerase (342 aa).

This sequence belongs to the QueA family. Monomer.

It localises to the cytoplasm. It catalyses the reaction 7-aminomethyl-7-carbaguanosine(34) in tRNA + S-adenosyl-L-methionine = epoxyqueuosine(34) in tRNA + adenine + L-methionine + 2 H(+). Its pathway is tRNA modification; tRNA-queuosine biosynthesis. Its function is as follows. Transfers and isomerizes the ribose moiety from AdoMet to the 7-aminomethyl group of 7-deazaguanine (preQ1-tRNA) to give epoxyqueuosine (oQ-tRNA). The polypeptide is S-adenosylmethionine:tRNA ribosyltransferase-isomerase (Bacillus licheniformis (strain ATCC 14580 / DSM 13 / JCM 2505 / CCUG 7422 / NBRC 12200 / NCIMB 9375 / NCTC 10341 / NRRL NRS-1264 / Gibson 46)).